The primary structure comprises 390 residues: Phosphoglycerate kinase (390 aa).

Residues 19-21 (DYN), Arg34, 57-60 (HLGR), Arg115, and Arg148 contribute to the substrate site. ATP is bound by residues Lys198, Gly289, Glu320, and 347–350 (GGDS).

This sequence belongs to the phosphoglycerate kinase family. As to quaternary structure, monomer.

The protein localises to the cytoplasm. It carries out the reaction (2R)-3-phosphoglycerate + ATP = (2R)-3-phospho-glyceroyl phosphate + ADP. The protein operates within carbohydrate degradation; glycolysis; pyruvate from D-glyceraldehyde 3-phosphate: step 2/5. This is Phosphoglycerate kinase (pgk) from Thermus thermophilus (strain ATCC 27634 / DSM 579 / HB8).